The following is a 74-amino-acid chain: Conotoxin MiK41 (74 aa).

Positions 1 to 22 (MKLTCVLIITVLFLTACQLTTA) are cleaved as a signal peptide. Residues 23–45 (VTYSRGEHKHRALMSTGTNYRLP) constitute a propeptide that is removed on maturation. 3 disulfides stabilise this stretch: Cys48–Cys62, Cys55–Cys66, and Cys61–Cys73.

It belongs to the conotoxin O1 superfamily. In terms of tissue distribution, expressed by the venom duct.

It is found in the secreted. The sequence is that of Conotoxin MiK41 from Conus miles (Soldier cone).